Here is a 359-residue protein sequence, read N- to C-terminus: MRLEISSPQTKLPYPKTEELPFTLQELRNAIPADCFEPSVVRSLGYFFLDVGLIAGFYALAAYLDSWFFYPIFWLIQGTLFWSLFVVGHDCGHGSFSKSKTLNNWIGHLSHTPILVPYHGWRISHRTHHANTGNIDTDESWYPVSEQKYNQMAWYEKLLRFYLPLIAYPIYLFRRSPNRQGSHFMPGSPLFRPGEKAAVLTSTFALAAFVGFLGFLTWQFGWLFLLKFYVAPYLVFVVWLDLVTFLHHTEDNIPWYRGDDWYFLKGALSTIDRDYGFINPIHHDIGTHVAHHIFSNMPHYKLRRATEAIKPILGEYYRYSDEPIWQAFFKSYWACHFVPNQGSGVYYQSPSNGGYQKKP.

A run of 2 helical transmembrane segments spans residues 44–64 (LGYF…AAYL) and 67–87 (WFFY…LFVV). The short motif at 89-93 (HDCGH) is the Histidine box-1 element. The Histidine box-2 signature appears at 125–129 (HRTHH). A run of 3 helical transmembrane segments spans residues 153 to 173 (AWYE…IYLF), 206 to 226 (LAAF…LFLL), and 228 to 248 (FYVA…FLHH). A Histidine box-3 motif is present at residues 291 to 295 (HHIFS).

Belongs to the fatty acid desaturase type 2 family. Requires Fe(2+) as cofactor.

It localises to the membrane. It carries out the reaction a 1-[(9Z,12Z)-octadecdienoyl]-2-acyl-glycerolipid + 2 reduced [2Fe-2S]-[ferredoxin] + O2 + 2 H(+) = a 1-[(9Z,12Z,15Z)-octadectrienoyl]-2-acyl-glycerolipid + 2 oxidized [2Fe-2S]-[ferredoxin] + 2 H2O. The catalysed reaction is a 1-[(6Z,9Z,12Z)-octadectrienoyl]-2-acyl-glycerolipid + 2 reduced [2Fe-2S]-[ferredoxin] + O2 + 2 H(+) = a 1-[(6Z,9Z,12Z,15Z)-octadectetraenoyl]-2-acyl-glycerolipid + 2 oxidized [2Fe-2S]-[ferredoxin] + 2 H2O. The protein operates within lipid metabolism; polyunsaturated fatty acid biosynthesis. In terms of biological role, desaturase involved in fatty acid biosynthesis. Introduces a double bond at carbon 15 of linoleoyl and gamma-linolenoyl groups attached to the sn-1 position of the glycerol moiety of membrane glycerolipids. The protein is sn-1 acyl-lipid omega-3 desaturase (ferredoxin) of Synechocystis sp. (strain ATCC 27184 / PCC 6803 / Kazusa).